We begin with the raw amino-acid sequence, 206 residues long: Large ribosomal subunit protein uL4 (206 aa).

Belongs to the universal ribosomal protein uL4 family. Part of the 50S ribosomal subunit.

One of the primary rRNA binding proteins, this protein initially binds near the 5'-end of the 23S rRNA. It is important during the early stages of 50S assembly. It makes multiple contacts with different domains of the 23S rRNA in the assembled 50S subunit and ribosome. In terms of biological role, forms part of the polypeptide exit tunnel. The protein is Large ribosomal subunit protein uL4 of Rhodopseudomonas palustris (strain BisA53).